Here is a 758-residue protein sequence, read N- to C-terminus: Vitamin K-dependent gamma-carboxylase (758 aa).

The disordered stretch occupies residues 1–34 (MAVSARPARAPRGSDKVKKDKAAQTSGPRQGSRM). A2 is modified (N-acetylalanine). The Cytoplasmic segment spans residues 2 to 60 (AVSARPARAPRGSDKVKKDKAAQTSGPRQGSRMGKLLGFEWTDVSSWERLVTLLNRPTD). A compositionally biased stretch (basic and acidic residues) spans 12 to 22 (RGSDKVKKDKA). Residues 61–81 (PAGLAVFRFLFGLMMVLDIPQ) form a helical membrane-spanning segment. The Lumenal segment spans residues 82-113 (ERGLSSLDRRYLDGLEVCRFPLLDALQPLPLD). A disulfide bridge links C99 with C450. The chain crosses the membrane as a helical span at residues 114 to 134 (WMYLIYTIMFLGALGMMLGLC). Over 135 to 136 (YR) the chain is Cytoplasmic. Residues 137-157 (ISCVLFLLPYWYVFLLDKTSW) form a helical membrane-spanning segment. The Lumenal portion of the chain corresponds to 158 to 292 (NNHSYLYGLL…VSYFHCMNSQ (135 aa)). The chain crosses the membrane as a helical span at residues 293 to 313 (LFSIGMFPYVMLASSPLFCSP). Over 314 to 363 (EWPRKLVAHCPKKLQELLPLRTAPQPSTSCMYKRSRARGSQKPGLRHKLS) the chain is Cytoplasmic. The helical transmembrane segment at 364–384 (TAFTLLYLLEQLFLPYSHFLT) threads the bilayer. The Lumenal segment spans residues 385-758 (QGYNNWTNGL…PDSHPVHSEF (374 aa)). The interval 727–758 (PFEPAGEPSPVNTDSSNPNPPEPDSHPVHSEF) is disordered. Positions 749–758 (PDSHPVHSEF) are enriched in basic and acidic residues.

In terms of assembly, monomer. May interact with CALU. Post-translationally, the N-terminus is blocked.

It localises to the endoplasmic reticulum membrane. It carries out the reaction 4-carboxy-L-glutamyl-[protein] + 2,3-epoxyphylloquinone + H2O + H(+) = phylloquinol + L-glutamyl-[protein] + CO2 + O2. In terms of biological role, mediates the vitamin K-dependent carboxylation of glutamate residues to calcium-binding gamma-carboxyglutamate (Gla) residues with the concomitant conversion of the reduced hydroquinone form of vitamin K to vitamin K epoxide. Catalyzes gamma-carboxylation of various proteins, such as blood coagulation factors (F2, F7, F9 and F10), osteocalcin (BGLAP) or matrix Gla protein (MGP). The polypeptide is Vitamin K-dependent gamma-carboxylase (GGCX) (Bos taurus (Bovine)).